The chain runs to 55 residues: Large ribosomal subunit protein bL33 (55 aa).

Belongs to the bacterial ribosomal protein bL33 family.

This is Large ribosomal subunit protein bL33 from Xanthobacter autotrophicus (strain ATCC BAA-1158 / Py2).